We begin with the raw amino-acid sequence, 355 residues long: DNA polymerase IV (355 aa).

A UmuC domain is found at 7-188 (IIHIDMDCFY…LPLSKIPGVG (182 aa)). 2 residues coordinate Mg(2+): D11 and D106. E107 is a catalytic residue.

The protein belongs to the DNA polymerase type-Y family. Monomer. Mg(2+) is required as a cofactor.

It is found in the cytoplasm. The enzyme catalyses DNA(n) + a 2'-deoxyribonucleoside 5'-triphosphate = DNA(n+1) + diphosphate. Its function is as follows. Poorly processive, error-prone DNA polymerase involved in untargeted mutagenesis. Copies undamaged DNA at stalled replication forks, which arise in vivo from mismatched or misaligned primer ends. These misaligned primers can be extended by PolIV. Exhibits no 3'-5' exonuclease (proofreading) activity. May be involved in translesional synthesis, in conjunction with the beta clamp from PolIII. This Mannheimia succiniciproducens (strain KCTC 0769BP / MBEL55E) protein is DNA polymerase IV.